We begin with the raw amino-acid sequence, 436 residues long: GTPase Der (436 aa).

EngA-type G domains follow at residues 4 to 167 and 176 to 351; these read PIVA…GEEE and IRLS…ENHK. Residues 10-17, 57-61, 119-122, 182-189, 229-233, and 294-297 contribute to the GTP site; these read GRPNVGKS, DTGGI, NKVD, DTAGM, and NKWD. One can recognise a KH-like domain in the interval 352–436; the sequence is KRVQSSTLNE…PIHIIARKRN (85 aa).

Belongs to the TRAFAC class TrmE-Era-EngA-EngB-Septin-like GTPase superfamily. EngA (Der) GTPase family. Associates with the 50S ribosomal subunit.

Functionally, GTPase that plays an essential role in the late steps of ribosome biogenesis. In Staphylococcus aureus (strain Mu3 / ATCC 700698), this protein is GTPase Der.